The chain runs to 137 residues: TM2 domain-containing protein DDB_G0287015 (137 aa).

Positions 9–57 (QASLVVAYLLLIFLGFFGVHRFYVGRTISGVVYLLTGGIFGIGYIVDFF) constitute a TM2 domain. 2 helical membrane passes run 12–32 (LVVA…RFYV) and 39–59 (VVYL…FFLL). Residues 106–137 (IQPQQQQYYQQPYQQQQYQPQPYQPNSPQYQP) are disordered.

It belongs to the TM2 family.

It is found in the membrane. The polypeptide is TM2 domain-containing protein DDB_G0287015 (Dictyostelium discoideum (Social amoeba)).